Here is a 102-residue protein sequence, read N- to C-terminus: Small ribosomal subunit protein uS10 (102 aa).

It belongs to the universal ribosomal protein uS10 family. In terms of assembly, part of the 30S ribosomal subunit.

Its function is as follows. Involved in the binding of tRNA to the ribosomes. The protein is Small ribosomal subunit protein uS10 of Listeria innocua serovar 6a (strain ATCC BAA-680 / CLIP 11262).